Here is a 510-residue protein sequence, read N- to C-terminus: 2,3-bisphosphoglycerate-independent phosphoglycerate mutase (510 aa).

Mn(2+) contacts are provided by D14 and S64. S64 serves as the catalytic Phosphoserine intermediate. Residues H125, 155–156 (RD), R187, R193, 259–262 (RADR), and K332 contribute to the substrate site. Mn(2+) contacts are provided by D399, H403, D440, H441, and H459.

This sequence belongs to the BPG-independent phosphoglycerate mutase family. Monomer. Requires Mn(2+) as cofactor.

It catalyses the reaction (2R)-2-phosphoglycerate = (2R)-3-phosphoglycerate. Its pathway is carbohydrate degradation; glycolysis; pyruvate from D-glyceraldehyde 3-phosphate: step 3/5. In terms of biological role, catalyzes the interconversion of 2-phosphoglycerate and 3-phosphoglycerate. This chain is 2,3-bisphosphoglycerate-independent phosphoglycerate mutase, found in Pseudomonas savastanoi pv. phaseolicola (strain 1448A / Race 6) (Pseudomonas syringae pv. phaseolicola (strain 1448A / Race 6)).